Reading from the N-terminus, the 403-residue chain is Acetate kinase (403 aa).

A Mg(2+)-binding site is contributed by asparagine 7. Residue lysine 14 participates in ATP binding. Arginine 90 contacts substrate. Aspartate 147 functions as the Proton donor/acceptor in the catalytic mechanism. ATP-binding positions include 207–211 (HIGNG), 283–285 (DMR), and 331–335 (GVGEN). Glutamate 386 contacts Mg(2+).

This sequence belongs to the acetokinase family. As to quaternary structure, homodimer. Mg(2+) is required as a cofactor. Mn(2+) serves as cofactor.

It localises to the cytoplasm. It carries out the reaction acetate + ATP = acetyl phosphate + ADP. Its pathway is metabolic intermediate biosynthesis; acetyl-CoA biosynthesis; acetyl-CoA from acetate: step 1/2. Catalyzes the formation of acetyl phosphate from acetate and ATP. Can also catalyze the reverse reaction. The sequence is that of Acetate kinase from Thermotoga sp. (strain RQ2).